Here is a 505-residue protein sequence, read N- to C-terminus: Sucrose porin (505 aa).

The signal sequence occupies residues 1 to 22 (MYRKSTLAMLIALLTSAASAHA). The tract at residues 44–87 (ENRAQTAENRAGAAEKKVQQLTAQQQKNQNSTQEVAQRTARLEK) is disordered. Residues 62–72 (QQLTAQQQKNQ) show a composition bias toward low complexity.

This sequence belongs to the porin LamB (TC 1.B.3) family. In terms of assembly, homotrimer.

Its subcellular location is the cell outer membrane. Its function is as follows. Porin for sucrose uptake. The sequence is that of Sucrose porin (scrY) from Salmonella typhimurium.